The primary structure comprises 117 residues: Hydrogenase maturation factor HypA (117 aa).

Residue histidine 2 participates in Ni(2+) binding. The Zn(2+) site is built by cysteine 73, cysteine 76, cysteine 89, and cysteine 92.

Belongs to the HypA/HybF family.

In terms of biological role, involved in the maturation of [NiFe] hydrogenases. Required for nickel insertion into the metal center of the hydrogenase. The protein is Hydrogenase maturation factor HypA of Pelodictyon phaeoclathratiforme (strain DSM 5477 / BU-1).